A 116-amino-acid chain; its full sequence is uncharacterized protein (116 aa).

Positions 64 to 116 (RRFYSGTVNRNARSAGAASRSTSSVKRPLESKKRNARPETEKWCASYSAGNRR) are disordered. Low complexity predominate over residues 73 to 87 (RNARSAGAASRSTSS). The span at 90 to 105 (RPLESKKRNARPETEK) shows a compositional bias: basic and acidic residues.

This is an uncharacterized protein from Saccharomyces cerevisiae (strain ATCC 204508 / S288c) (Baker's yeast).